The sequence spans 211 residues: Imidazole glycerol phosphate synthase subunit HisH (211 aa).

In terms of domain architecture, Glutamine amidotransferase type-1 spans 3 to 211 (VIAVIDYDMG…VNQIRVKAIA (209 aa)). The active-site Nucleophile is the C81. Catalysis depends on residues H186 and E188.

Heterodimer of HisH and HisF.

It is found in the cytoplasm. The catalysed reaction is 5-[(5-phospho-1-deoxy-D-ribulos-1-ylimino)methylamino]-1-(5-phospho-beta-D-ribosyl)imidazole-4-carboxamide + L-glutamine = D-erythro-1-(imidazol-4-yl)glycerol 3-phosphate + 5-amino-1-(5-phospho-beta-D-ribosyl)imidazole-4-carboxamide + L-glutamate + H(+). It carries out the reaction L-glutamine + H2O = L-glutamate + NH4(+). Its pathway is amino-acid biosynthesis; L-histidine biosynthesis; L-histidine from 5-phospho-alpha-D-ribose 1-diphosphate: step 5/9. Functionally, IGPS catalyzes the conversion of PRFAR and glutamine to IGP, AICAR and glutamate. The HisH subunit catalyzes the hydrolysis of glutamine to glutamate and ammonia as part of the synthesis of IGP and AICAR. The resulting ammonia molecule is channeled to the active site of HisF. The chain is Imidazole glycerol phosphate synthase subunit HisH from Gloeothece citriformis (strain PCC 7424) (Cyanothece sp. (strain PCC 7424)).